The following is a 596-amino-acid chain: Uptake hydrogenase large subunit (596 aa).

Residues cysteine 75, cysteine 78, cysteine 575, and cysteine 578 each contribute to the Ni(2+) site.

The protein belongs to the [NiFe]/[NiFeSe] hydrogenase large subunit family. In terms of assembly, heterodimer of a large and a small subunit. Requires Ni(2+) as cofactor.

The protein localises to the cell membrane. It carries out the reaction H2 + A = AH2. In terms of biological role, this enzyme recycles the H(2) produced by nitrogenase to increase the production of ATP and to protect nitrogenase against inhibition or damage by O(2) under carbon- or phosphate-limited conditions. The polypeptide is Uptake hydrogenase large subunit (hupB) (Rhizobium leguminosarum bv. viciae).